An 872-amino-acid polypeptide reads, in one-letter code: DNA mismatch repair protein MutS (872 aa).

602–609 (GPNMSGKS) contributes to the ATP binding site.

This sequence belongs to the DNA mismatch repair MutS family.

In terms of biological role, this protein is involved in the repair of mismatches in DNA. It is possible that it carries out the mismatch recognition step. This protein has a weak ATPase activity. In Staphylococcus aureus (strain Mu3 / ATCC 700698), this protein is DNA mismatch repair protein MutS.